The following is a 377-amino-acid chain: Endolytic peptidoglycan transglycosylase RlpA (377 aa).

A signal peptide spans Met-1–Ala-19. The N-palmitoyl cysteine moiety is linked to residue Cys-20. Cys-20 carries S-diacylglycerol cysteine lipidation. Positions Leu-196–Ala-277 are disordered. 2 stretches are compositionally biased toward low complexity: residues Ser-208–Gly-218 and Pro-264–Ala-277. The 77-residue stretch at Ala-300–Ala-376 folds into the SPOR domain.

Belongs to the RlpA family.

The protein resides in the cell membrane. Functionally, lytic transglycosylase with a strong preference for naked glycan strands that lack stem peptides. This Salmonella typhi protein is Endolytic peptidoglycan transglycosylase RlpA.